The sequence spans 221 residues: Phosphatidylethanolamine-binding protein homolog F40A3.3 (221 aa).

It belongs to the phosphatidylethanolamine-binding protein family.

The chain is Phosphatidylethanolamine-binding protein homolog F40A3.3 from Caenorhabditis elegans.